The primary structure comprises 398 residues: Probable transcription factor PosF21 (398 aa).

Disordered regions lie at residues 1 to 46 (MDKE…HDIS) and 112 to 150 (ATSS…NSLG). The span at 7–19 (PAPPCGGLPPPSP) shows a compositional bias: pro residues. The segment covering 125 to 148 (AWKNETMMQTGTGSTSNPQNTVNS) has biased composition (polar residues). A bZIP domain is found at 201 to 264 (DPKRAKRIWA…NGLTVENNEL (64 aa)). The tract at residues 203-224 (KRAKRIWANRQSAARSKERKTR) is basic motif. The segment at 229-264 (LERKVQTLQTEATTLSAQLTLLQRDTNGLTVENNEL) is leucine-zipper.

The protein belongs to the bZIP family.

The protein localises to the nucleus. Functionally, putative transcription factor with an activatory role. This is Probable transcription factor PosF21 (POSF21) from Arabidopsis thaliana (Mouse-ear cress).